The sequence spans 596 residues: Beta-glucuronidase (596 aa).

Residues aspartate 168 and asparagine 412 each coordinate D-glucuronate. Residue glutamate 413 is the Proton donor of the active site. Residues asparagine 464, tyrosine 470, glutamate 502, tryptophan 547, and lysine 566 each coordinate D-glucuronate. The active-site Nucleophile is glutamate 502. An N-K motif motif is present at residues 564-566; sequence NKK.

The protein belongs to the glycosyl hydrolase 2 family.

The protein localises to the cytoplasm. It carries out the reaction a beta-D-glucuronoside + H2O = D-glucuronate + an alcohol. Displays beta-glucuronidase activity with the artificial substrate p-nitrophenyl-beta-D-glucuronide (PNPG). Is probably involved in the metabolism of oligosaccharides containing the 3-O-beta-D-glucopyranosyl-beta-D-glucuronide structure released from bacterial and plant acidic carbohydrates. This is Beta-glucuronidase from Paenibacillus borealis.